A 1475-amino-acid chain; its full sequence is ABC transporter G family member 15 (1475 aa).

Residues 1–10 (MDSNENKKNG) are compositionally biased toward basic and acidic residues. Disordered regions lie at residues 1–40 (MDSN…EEHI) and 75–94 (NIKN…GGGA). Positions 17–34 (NIINNNNDNNNNNDNNNN) are enriched in low complexity. A coiled-coil region spans residues 25–67 (NNNNNDNNNNSTEEHIESVEQSIKEFNNVANELETEFRDYLVE). One can recognise an ABC transporter 1 domain in the interval 155 to 404 (LNVKNWFKKS…FIDMGFECEP (250 aa)). The ABC transmembrane type-2 1 domain maps to 507 to 753 (WGDKFSLISR…FTGERYLEKS (247 aa)). 5 helical membrane passes run 596 to 616 (IPII…MFGL), 623 to 641 (FFIN…NNLY), 653 to 673 (IGQN…SYII), 680 to 699 (VWFG…RALM), and 770 to 790 (ICIV…VLNI). In terms of domain architecture, ABC transporter 2 spans 842 to 1087 (FTWQHMYYSV…LTSYFQRHGV (246 aa)). 879–886 (GSSGAGKT) is a binding site for ATP. Helical transmembrane passes span 1180-1200 (GYSY…GWTF), 1216-1236 (FIFN…PQFI), 1256-1276 (FALS…TIFF), 1293-1313 (FFFW…GQAI), 1323-1343 (ALNL…VLVI), and 1449-1469 (FGII…FVFL). One can recognise an ABC transmembrane type-2 2 domain in the interval 1180 to 1404 (GYSYGTFIQS…TCSDYAFEFL (225 aa)).

Belongs to the ABC transporter superfamily. ABCG family. PDR (TC 3.A.1.205) subfamily.

Its subcellular location is the membrane. This Dictyostelium discoideum (Social amoeba) protein is ABC transporter G family member 15 (abcG15).